The sequence spans 961 residues: Lon protease homolog, mitochondrial (961 aa).

The N-terminal 67 residues, methionine 1–glycine 67, are a transit peptide targeting the mitochondrion. Disordered regions lie at residues glycine 76–glycine 103 and glutamine 220–glycine 262. The region spanning leucine 125–phenylalanine 371 is the Lon N-terminal domain. The segment covering lysine 235–lysine 244 has biased composition (basic residues). Over residues lysine 245–leucine 257 the composition is skewed to basic and acidic residues. Glycine 524–threonine 531 serves as a coordination point for ATP. Residues valine 760–glutamate 951 form the Lon proteolytic domain. Residues serine 784 to serine 801 show a composition bias toward basic and acidic residues. A disordered region spans residues serine 784–glutamate 803. Residues serine 857 and lysine 900 contribute to the active site.

This sequence belongs to the peptidase S16 family. Homohexamer. Organized in a ring with a central cavity. The ATP-binding and proteolytic domains (AP-domain) form a hexameric chamber, while the N-terminal domain is arranged as a trimer of dimers. DNA and RNA binding is stimulated by substrate and inhibited by ATP binding. Interacts with TWNK and mitochondrial DNA polymerase subunit POLG.

It is found in the mitochondrion matrix. It carries out the reaction Hydrolysis of proteins in presence of ATP.. Its function is as follows. ATP-dependent serine protease that mediates the selective degradation of misfolded, unassembled or oxidatively damaged polypeptides as well as certain short-lived regulatory proteins in the mitochondrial matrix. Endogenous substrates include mitochondrial steroidogenic acute regulatory (StAR) protein, DELE1, helicase Twinkle (TWNK) and the large ribosomal subunit protein MRPL32/bL32m. MRPL32/bL32m is protected from degradation by LONP1 when it is bound to a nucleic acid (RNA), but TWNK is not. May also have a chaperone function in the assembly of inner membrane protein complexes. Participates in the regulation of mitochondrial gene expression and in the maintenance of the integrity of the mitochondrial genome. Binds to mitochondrial promoters and RNA in a single-stranded, site-specific, and strand-specific manner. May regulate mitochondrial DNA replication and/or gene expression using site-specific, single-stranded DNA binding to target the degradation of regulatory proteins binding to adjacent sites in mitochondrial promoters. The chain is Lon protease homolog, mitochondrial from Bos taurus (Bovine).